The following is a 492-amino-acid chain: N-succinylglutamate 5-semialdehyde dehydrogenase (492 aa).

220–225 lines the NAD(+) pocket; sequence GSASTG. Active-site residues include Glu-243 and Cys-277.

It belongs to the aldehyde dehydrogenase family. AstD subfamily.

It carries out the reaction N-succinyl-L-glutamate 5-semialdehyde + NAD(+) + H2O = N-succinyl-L-glutamate + NADH + 2 H(+). Its pathway is amino-acid degradation; L-arginine degradation via AST pathway; L-glutamate and succinate from L-arginine: step 4/5. Catalyzes the NAD-dependent reduction of succinylglutamate semialdehyde into succinylglutamate. This chain is N-succinylglutamate 5-semialdehyde dehydrogenase, found in Salmonella enteritidis PT4 (strain P125109).